Here is a 342-residue protein sequence, read N- to C-terminus: Probable RNA methyltransferase PST_2231 (342 aa).

Residue E91 is the Proton acceptor of the active site. In terms of domain architecture, Radical SAM core spans 94–320; the sequence is LLPRDGLCVS…TKVRNSAGQD (227 aa). A disulfide bond links C101 and C325. C108, C112, and C115 together coordinate [4Fe-4S] cluster. Residues 153 to 154, S183, 206 to 208, and N282 each bind S-adenosyl-L-methionine; these read GE and SLH. The S-methylcysteine intermediate role is filled by C325.

Belongs to the radical SAM superfamily. RlmN family. It depends on [4Fe-4S] cluster as a cofactor.

It is found in the cytoplasm. This chain is Probable RNA methyltransferase PST_2231, found in Stutzerimonas stutzeri (strain A1501) (Pseudomonas stutzeri).